A 132-amino-acid chain; its full sequence is ATP synthase epsilon chain (132 aa).

This sequence belongs to the ATPase epsilon chain family. As to quaternary structure, F-type ATPases have 2 components, CF(1) - the catalytic core - and CF(0) - the membrane proton channel. CF(1) has five subunits: alpha(3), beta(3), gamma(1), delta(1), epsilon(1). CF(0) has three main subunits: a, b and c.

It localises to the cell membrane. Its function is as follows. Produces ATP from ADP in the presence of a proton gradient across the membrane. The chain is ATP synthase epsilon chain (atpC) from Bacillus sp. (strain PS3).